The chain runs to 238 residues: Uridylate kinase (238 aa).

Residue 12–15 (KLSG) coordinates ATP. Gly-54 lines the UMP pocket. ATP is bound by residues Gly-55 and Arg-59. UMP-binding positions include Asp-74 and 135 to 142 (TGNPYFTT). Residues Thr-162, Asn-163, Tyr-168, and Asp-171 each contribute to the ATP site.

The protein belongs to the UMP kinase family. As to quaternary structure, homohexamer.

It localises to the cytoplasm. It catalyses the reaction UMP + ATP = UDP + ADP. The protein operates within pyrimidine metabolism; CTP biosynthesis via de novo pathway; UDP from UMP (UMPK route): step 1/1. With respect to regulation, inhibited by UTP. Functionally, catalyzes the reversible phosphorylation of UMP to UDP. This chain is Uridylate kinase, found in Nitrobacter hamburgensis (strain DSM 10229 / NCIMB 13809 / X14).